An 890-amino-acid chain; its full sequence is Potassium/sodium hyperpolarization-activated cyclic nucleotide-gated channel 1 (890 aa).

A disordered region spans residues 1 to 93; the sequence is MEGGGKPNSS…AEGPRRQYGF (93 aa). The Cytoplasmic segment spans residues 1–142; that stretch reads MEGGGKPNSS…WIIHPYSDFR (142 aa). Residues 8-34 show a composition bias toward low complexity; it reads NSSSNSRDDGNSVFPAKASATGAGPAA. Residues 62–77 show a composition bias toward gly residues; it reads DGGGGGGGGGGGGEEP. Residues 143–164 traverse the membrane as a helical segment; sequence FYWDLIMLIMMVGNLVIIPVGI. Topologically, residues 165–173 are extracellular; that stretch reads TFFTEQTTT. The helical transmembrane segment at 174–194 threads the bilayer; that stretch reads PWIIFNVASDTVFLLDLIMNF. Over 195–215 the chain is Cytoplasmic; that stretch reads RTGTVNEDSSEIILDPKVIKM. A helical membrane pass occupies residues 216–236; that stretch reads NYLKSWFVVDFISSIPVDYIF. Residues 237-260 lie on the Extracellular side of the membrane; sequence LIVEKGMDSEVYKTARALRIVRFT. Residues 261-281 form a helical; Voltage-sensor membrane-spanning segment; sequence KILSLLRLLRLSRLIRYIHQW. Residues 282 to 295 lie on the Cytoplasmic side of the membrane; the sequence is EEIFHMTYDLASAV. The helical transmembrane segment at 296–318 threads the bilayer; it reads VRIFNLIGMMLLLCHWDGCLQFL. The Extracellular portion of the chain corresponds to 319-344; it reads VPLLQDFPPDCWVSLNEMVNDSWGKQ. An N-linked (GlcNAc...) asparagine glycan is attached at N338. Positions 345–366 form an intramembrane region, pore-forming; the sequence is YSYALFKAMSHMLCIGYGAQAP. The short motif at 358 to 362 is the Selectivity filter element; that stretch reads CIGYG. The Extracellular portion of the chain corresponds to 367–371; it reads VSMSD. The chain crosses the membrane as a helical span at residues 372–392; sequence LWITMLSMIVGATCYAMFVGH. The Cytoplasmic portion of the chain corresponds to 393 to 890; it reads ATALIQSLDS…AEKPRFASNL (498 aa). 3',5'-cyclic AMP is bound by residues G539, E540, C542, R549, T550, R590, and R593. 2 stretches are compositionally biased toward low complexity: residues 644–691 and 731–749; these read MTTL…PQPS and QQQPQQQVQQSQPPQTQPQ. Disordered regions lie at residues 644–692, 725–796, and 845–890; these read MTTL…QPSA, SQLS…LPHE, and MSSG…ASNL. Positions 770-780 are enriched in polar residues; the sequence is STQALHNTNLT. Pro residues predominate over residues 854-865; that stretch reads RGVPPAPPPPAA. Positions 880 to 890 are enriched in basic and acidic residues; it reads DAEKPRFASNL.

The protein belongs to the potassium channel HCN family. In terms of assembly, homotetramer. Heterotetramer with HCN2. The potassium channel is composed of a homo- or heterotetrameric complex of pore-forming subunits. Interacts with KCNE2. Interacts with the SH3 domain of CSK. Detected in brain, in particular in amygdala and hippocampus, while expression in caudate nucleus, corpus callosum, substantia nigra, subthalamic nucleus and thalamus is very low or not detectable. Detected at very low levels in muscle and pancreas.

Its subcellular location is the cell membrane. It carries out the reaction Na(+)(in) = Na(+)(out). The enzyme catalyses K(+)(in) = K(+)(out). Its activity is regulated as follows. Activated by cAMP, and at 10-100 times higher concentrations, also by cGMP. cAMP binding promotes tetramerization and formation of an active channel. Compared to other family members, cAMP has less stimulatory effect on HCN1 because part of the molecules already contain bound cAMP and form homotetramers when cAMP levels are low, this inherent tetramerization in HCN1 results in a weaker response to increased cAMP. Inhibited by Cs(1+), zatebradine, capsazepine and ZD7288. Its function is as follows. Hyperpolarization-activated ion channel that are permeable to sodium and potassium ions. Displays lower selectivity for K(+) over Na(+) ions. Contributes to the native pacemaker currents in heart (If) and in the generation of the I(h) current which controls neuron excitability. Participates in cerebellar mechanisms of motor learning. May mediate responses to sour stimuli. This chain is Potassium/sodium hyperpolarization-activated cyclic nucleotide-gated channel 1 (HCN1), found in Homo sapiens (Human).